Here is an 822-residue protein sequence, read N- to C-terminus: Putative ESX-1 scaffolding and assembly protein SaeB (822 aa).

In terms of biological role, may be involved in assembly of the ESX-1 / type VII specialized secretion system (T7SS), which exports several proteins including EsxA and EsxB. Involved in DNA conjugation in recipient (MKD8) but not donor (mc(2)155) strain. The chain is Putative ESX-1 scaffolding and assembly protein SaeB (saeB) from Mycolicibacterium smegmatis (strain MKD8) (Mycobacterium smegmatis).